The primary structure comprises 189 residues: dCTP deaminase (189 aa).

DCTP-binding positions include 112–117 (KSTYAR), 136–138 (TLE), glutamine 157, tyrosine 171, and glutamine 181. Glutamate 138 functions as the Proton donor/acceptor in the catalytic mechanism.

It belongs to the dCTP deaminase family. As to quaternary structure, homotrimer.

The enzyme catalyses dCTP + H2O + H(+) = dUTP + NH4(+). It functions in the pathway pyrimidine metabolism; dUMP biosynthesis; dUMP from dCTP (dUTP route): step 1/2. Catalyzes the deamination of dCTP to dUTP. In Burkholderia mallei (strain NCTC 10247), this protein is dCTP deaminase.